Reading from the N-terminus, the 409-residue chain is Translation initiation factor 2 subunit gamma (409 aa).

A tr-type G domain is found at 7-203 (QPEVNIGLVG…AIEREIPTPE (197 aa)). Residues 16–23 (GHVDHGKT) are G1. Residues D19, T23, G44, and S46 each coordinate Mg(2+). Residue 19 to 24 (DHGKTT) coordinates GTP. The tract at residues 44–48 (GISIR) is G2. The segment at 90–93 (DAPG) is G3. Residues 146 to 149 (NKID) and 181 to 183 (SAQ) each bind GTP. The G4 stretch occupies residues 146–149 (NKID). The tract at residues 181 to 183 (SAQ) is G5.

The protein belongs to the TRAFAC class translation factor GTPase superfamily. Classic translation factor GTPase family. EIF2G subfamily. Heterotrimer composed of an alpha, a beta and a gamma chain. The cofactor is Mg(2+).

It catalyses the reaction GTP + H2O = GDP + phosphate + H(+). EIF-2 functions in the early steps of protein synthesis by forming a ternary complex with GTP and initiator tRNA. This is Translation initiation factor 2 subunit gamma from Haloquadratum walsbyi (strain DSM 16790 / HBSQ001).